The sequence spans 144 residues: RxLR effector protein PITG_03192 (144 aa).

A signal peptide spans 1 to 24 (MRVGFVFALLVVSVIVCFNGLTSA). The RxLR-dEER signature appears at 49 to 58 (RNLRASGEER). Asparagine 115 is a glycosylation site (N-linked (GlcNAc...) asparagine). The chain crosses the membrane as a helical span at residues 122–142 (FFILATLVMFPIGVWAVVTNY).

This sequence belongs to the RxLR effector family. Interacts with the C-terminal portions the ER-associated potato NAC transcription factors NTP1 and NTP2.

The protein resides in the secreted. It is found in the host endoplasmic reticulum membrane. Its function is as follows. Effector that is required for full virulence. Targets host NTP1 and NTP2 transcription factors and prevents their pathogen-associated molecular pattern (PAMP)-triggered re-localization from the endoplasmic reticulum into the nucleus, where they contribute to prevent disease progression by P.infestans. The polypeptide is RxLR effector protein PITG_03192 (Phytophthora infestans (strain T30-4) (Potato late blight agent)).